The chain runs to 273 residues: Ribosomal RNA small subunit methyltransferase A (273 aa).

Residues Asn-25, Leu-27, Gly-52, Glu-73, Asp-99, and Asn-118 each contribute to the S-adenosyl-L-methionine site.

The protein belongs to the class I-like SAM-binding methyltransferase superfamily. rRNA adenine N(6)-methyltransferase family. RsmA subfamily.

It localises to the cytoplasm. It catalyses the reaction adenosine(1518)/adenosine(1519) in 16S rRNA + 4 S-adenosyl-L-methionine = N(6)-dimethyladenosine(1518)/N(6)-dimethyladenosine(1519) in 16S rRNA + 4 S-adenosyl-L-homocysteine + 4 H(+). In terms of biological role, specifically dimethylates two adjacent adenosines (A1518 and A1519) in the loop of a conserved hairpin near the 3'-end of 16S rRNA in the 30S particle. May play a critical role in biogenesis of 30S subunits. The chain is Ribosomal RNA small subunit methyltransferase A from Novosphingobium aromaticivorans (strain ATCC 700278 / DSM 12444 / CCUG 56034 / CIP 105152 / NBRC 16084 / F199).